Consider the following 205-residue polypeptide: GTP cyclohydrolase-2 (205 aa).

A GTP-binding site is contributed by 49-53; that stretch reads RLHSE. Zn(2+) is bound by residues Cys-54, Cys-65, and Cys-67. GTP is bound by residues Gln-70, 92–94, and Thr-114; that span reads EGR. Asp-126 (proton acceptor) is an active-site residue. The active-site Nucleophile is the Arg-128. The GTP site is built by Thr-149 and Lys-154.

The protein belongs to the GTP cyclohydrolase II family. Zn(2+) is required as a cofactor.

It catalyses the reaction GTP + 4 H2O = 2,5-diamino-6-hydroxy-4-(5-phosphoribosylamino)-pyrimidine + formate + 2 phosphate + 3 H(+). It participates in cofactor biosynthesis; riboflavin biosynthesis; 5-amino-6-(D-ribitylamino)uracil from GTP: step 1/4. In terms of biological role, catalyzes the conversion of GTP to 2,5-diamino-6-ribosylamino-4(3H)-pyrimidinone 5'-phosphate (DARP), formate and pyrophosphate. This chain is GTP cyclohydrolase-2, found in Pseudomonas aeruginosa (strain UCBPP-PA14).